The primary structure comprises 377 residues: Stimulator of interferon genes protein (377 aa).

The Cytoplasmic segment spans residues methionine 1–threonine 21. Residues proline 22–isoleucine 42 traverse the membrane as a helical segment. Over threonine 43 to serine 57 the chain is Extracellular. The helical transmembrane segment at phenylalanine 58–alanine 80 threads the bilayer. Over glutamate 81–threonine 101 the chain is Cytoplasmic. The chain crosses the membrane as a helical span at residues phenylalanine 102–valine 122. Residues alanine 123–glycine 154 are Extracellular-facing. Residues leucine 155–leucine 175 traverse the membrane as a helical segment. The Cytoplasmic portion of the chain corresponds to arginine 176 to glycine 377. Residues tyrosine 206, arginine 272, arginine 278 to histidine 279, and threonine 303 each bind 2',3'-cGAMP. Residues tyrosine 206, arginine 272, arginine 278, and glutamate 300 to threonine 303 contribute to the 3',3'-c-di-GMP site.

This sequence belongs to the TMEM173 family. As to quaternary structure, homodimer.

Its subcellular location is the endoplasmic reticulum membrane. Functionally, sensor of cytosolic DNA from bacteria and viruses that promotes autophagy. Acts by recognizing and binding cyclic GMP-AMP (cGAMP), a messenger produced by CGAS in response to DNA in the cytosol. Following cGAMP-binding, promotes the formation of autophagosomes, leading to target cytosolic DNA for degradation by the lysosome. Exhibits guanine base-specific ligand recognition. Binds 3'-3'linked cGAMP, 2'-3' linked cGAMP and 3'-3' linked c-di-GMP with much greater affinity as compared to 3'-3' linked c-di-AMP. Lacks the C-terminal tail (CTT) found in mammalian orthologs which is essential for interferon signaling. In Nematostella vectensis (Starlet sea anemone), this protein is Stimulator of interferon genes protein.